The following is a 196-amino-acid chain: Probable cobalt-precorrin-6B C(15)-methyltransferase (decarboxylating) (196 aa).

Residues Thr-24, 48 to 52, Asp-72, and Ala-101 contribute to the S-adenosyl-L-methionine site; that span reads GCGTG.

This sequence belongs to the methyltransferase superfamily. Archaeal-type CbiT family.

The enzyme catalyses Co-precorrin-6B + S-adenosyl-L-methionine = Co-precorrin-7 + S-adenosyl-L-homocysteine + CO2. It functions in the pathway cofactor biosynthesis; adenosylcobalamin biosynthesis; cob(II)yrinate a,c-diamide from sirohydrochlorin (anaerobic route): step 8/10. Its function is as follows. Catalyzes the methylation of C-15 in cobalt-precorrin-6B followed by the decarboxylation of C-12 to form cobalt-precorrin-7. The chain is Probable cobalt-precorrin-6B C(15)-methyltransferase (decarboxylating) from Pyrobaculum aerophilum (strain ATCC 51768 / DSM 7523 / JCM 9630 / CIP 104966 / NBRC 100827 / IM2).